Consider the following 616-residue polypeptide: Sulfite reductase [NADPH] hemoprotein beta-component (616 aa).

Residues 1–10 (MDDHSPRDAA) show a composition bias toward basic and acidic residues. The disordered stretch occupies residues 1 to 35 (MDDHSPRDAAETPAPGPAATPAKRVYETPPTSRPI). Low complexity predominate over residues 11-22 (ETPAPGPAATPA). Residues Cys470, Cys476, Cys515, and Cys519 each coordinate [4Fe-4S] cluster. A siroheme-binding site is contributed by Cys519.

Belongs to the nitrite and sulfite reductase 4Fe-4S domain family. In terms of assembly, alpha(8)-beta(8). The alpha component is a flavoprotein, the beta component is a hemoprotein. The cofactor is siroheme. Requires [4Fe-4S] cluster as cofactor.

It catalyses the reaction hydrogen sulfide + 3 NADP(+) + 3 H2O = sulfite + 3 NADPH + 4 H(+). The protein operates within sulfur metabolism; hydrogen sulfide biosynthesis; hydrogen sulfide from sulfite (NADPH route): step 1/1. Component of the sulfite reductase complex that catalyzes the 6-electron reduction of sulfite to sulfide. This is one of several activities required for the biosynthesis of L-cysteine from sulfate. This is Sulfite reductase [NADPH] hemoprotein beta-component from Methylobacterium radiotolerans (strain ATCC 27329 / DSM 1819 / JCM 2831 / NBRC 15690 / NCIMB 10815 / 0-1).